We begin with the raw amino-acid sequence, 461 residues long: UDP-glycosyltransferase 88B1 (461 aa).

UDP-alpha-D-glucose is bound by residues Ser278, 340–341 (WA), 358–366 (HCGWNSSLE), and 380–383 (YAEQ).

The protein belongs to the UDP-glycosyltransferase family.

Functionally, may glycosylate diterpenes or flavonols in leaves. This is UDP-glycosyltransferase 88B1 from Stevia rebaudiana (Stevia).